The chain runs to 123 residues: Immunoglobulin lambda variable 5-45 (123 aa).

Positions 1–19 (MAWTPLLLLFLSHCTGSLS) are cleaved as a signal peptide. The framework-1 stretch occupies residues 20–44 (QAVLTQPSSLSASPGASASLTCTLC). The region spanning 20–123 (QAVLTQPSSL…YCMIWHSSAS (104 aa)) is the Ig-like domain. Cysteine 41 and cysteine 115 are joined by a disulfide. A complementarity-determining-1 region spans residues 45 to 53 (SGINVGTYR). The tract at residues 54–70 (IYWYQQKPGSPPQYLLR) is framework-2. The interval 68–92 (LLRYKSDSDKQQGSGVPSRFSGSKD) is disordered. The interval 71 to 77 (YKSDSDK) is complementarity-determining-2. The segment covering 78 to 92 (QQGSGVPSRFSGSKD) has biased composition (polar residues). The tract at residues 78 to 115 (QQGSGVPSRFSGSKDASANAGILLISGLQSEDEADYYC) is framework-3. Positions 116-123 (MIWHSSAS) are complementarity-determining-3.

Immunoglobulins are composed of two identical heavy chains and two identical light chains; disulfide-linked.

Its subcellular location is the secreted. The protein resides in the cell membrane. In terms of biological role, v region of the variable domain of immunoglobulin light chains that participates in the antigen recognition. Immunoglobulins, also known as antibodies, are membrane-bound or secreted glycoproteins produced by B lymphocytes. In the recognition phase of humoral immunity, the membrane-bound immunoglobulins serve as receptors which, upon binding of a specific antigen, trigger the clonal expansion and differentiation of B lymphocytes into immunoglobulins-secreting plasma cells. Secreted immunoglobulins mediate the effector phase of humoral immunity, which results in the elimination of bound antigens. The antigen binding site is formed by the variable domain of one heavy chain, together with that of its associated light chain. Thus, each immunoglobulin has two antigen binding sites with remarkable affinity for a particular antigen. The variable domains are assembled by a process called V-(D)-J rearrangement and can then be subjected to somatic hypermutations which, after exposure to antigen and selection, allow affinity maturation for a particular antigen. This is Immunoglobulin lambda variable 5-45 from Homo sapiens (Human).